We begin with the raw amino-acid sequence, 690 residues long: MKPLLLLTLLGCLAAALAVPAQKVKWCVKSDQEFRKCSDLAAASPAFSCVKKESTLDCIIAIKAGEADAITVDGGDVYTAGLNNYDLHPIIAEDYGTSSETCYYAVAVAKKGTTFGIRDLRGKKSCHTGLGKSAGWNIPIGTLVSMDIIQWAGVEDKPVEEEVSTFFQASCVPGATRGSKLCELCKGDCSRSQKEPYYDYNGAFNCLAEGAGDVAFVKHLTVPDQEKSKYELLCRDNTRAPIDDYKKCNLARVPAHAIVTHKDPQLAELIWTSLNSVQNFNLFSSEAYAPSKNLMFKDSTQRLVKLPQNTDSFLYLGAQYMSIVRSLKKEQSVGTNSNAIKWCAVGHAETAKCDTWSINSVTDDTAAIECQNAPSVEECLKKIMRKEADAMAVDGGEVYTAGKCGLVPAMVEQYDAELCSSSGGQASSYYAVAVVKKDSGVTWENLKGKKSCHTGIGRTAGWNIPMGRIYDQTKDCDFTKFFPSGCAPEPKPALHCALCVKAAAKLSGDEAKCKARPEEQYYGYAGAFRCLAEGAGDVAFIKHTIVGENTDGNGPDWARSLKSDDYQLICPGKGPVPISEYASCNLAVVPAHAVVTRPESRSDVVRVLQVQQTFFGASGSDPSFKLFQSQNGNNLLFKDSTKCLQEVPAGTSYDQFLGSGYMEAMTSLRKCSDTASDLEKSCTFHSCQQT.

Positions 1 to 17 are cleaved as a signal peptide; it reads MKPLLLLTLLGCLAAAL. Transferrin-like domains are found at residues 24–329 and 340–670; these read VKWC…SLKK and IKWC…SLRK. An intrachain disulfide couples Cys27 to Cys49. Residues Asp73 and Tyr103 each contribute to the Fe(3+) site. 3 disulfide bridges follow: Cys126–Cys206, Cys171–Cys185, and Cys234–Cys248. Residues Thr128, Lys132, Ala134, and Gly135 each contribute to the hydrogencarbonate site. Tyr200 contacts Fe(3+). Fe(3+) is bound at residue His256. 2 disulfides stabilise this stretch: Cys343/Cys379 and Cys353/Cys370. Fe(3+) contacts are provided by Asp394 and Tyr429. 7 cysteine pairs are disulfide-bonded: Cys404-Cys682, Cys419-Cys643, Cys452-Cys530, Cys476-Cys671, Cys486-Cys499, Cys496-Cys513, and Cys570-Cys584. 4 residues coordinate hydrogencarbonate: Thr454, Arg458, Ala460, and Gly461. Tyr524 is a Fe(3+) binding site. His592 is a Fe(3+) binding site.

This sequence belongs to the transferrin family. In terms of assembly, monomer.

The protein localises to the secreted. Its function is as follows. Transferrins are iron binding transport proteins which can bind two Fe(3+) ions in association with the binding of an anion, usually bicarbonate. In Oryzias latipes (Japanese rice fish), this protein is Serotransferrin (tf).